The primary structure comprises 412 residues: Multifunctional CCA protein (412 aa).

ATP contacts are provided by glycine 8 and arginine 11. Glycine 8 and arginine 11 together coordinate CTP. 2 residues coordinate Mg(2+): aspartate 21 and aspartate 23. The ATP site is built by arginine 91, arginine 137, and arginine 140. 3 residues coordinate CTP: arginine 91, arginine 137, and arginine 140. The 102-residue stretch at 228–329 (TGIHTLMTLS…VKLFDSIDAW (102 aa)) folds into the HD domain.

It belongs to the tRNA nucleotidyltransferase/poly(A) polymerase family. Bacterial CCA-adding enzyme type 1 subfamily. In terms of assembly, monomer. Can also form homodimers and oligomers. The cofactor is Mg(2+). Ni(2+) serves as cofactor.

The enzyme catalyses a tRNA precursor + 2 CTP + ATP = a tRNA with a 3' CCA end + 3 diphosphate. It carries out the reaction a tRNA with a 3' CCA end + 2 CTP + ATP = a tRNA with a 3' CCACCA end + 3 diphosphate. Its function is as follows. Catalyzes the addition and repair of the essential 3'-terminal CCA sequence in tRNAs without using a nucleic acid template. Adds these three nucleotides in the order of C, C, and A to the tRNA nucleotide-73, using CTP and ATP as substrates and producing inorganic pyrophosphate. tRNA 3'-terminal CCA addition is required both for tRNA processing and repair. Also involved in tRNA surveillance by mediating tandem CCA addition to generate a CCACCA at the 3' terminus of unstable tRNAs. While stable tRNAs receive only 3'-terminal CCA, unstable tRNAs are marked with CCACCA and rapidly degraded. The sequence is that of Multifunctional CCA protein from Escherichia coli O139:H28 (strain E24377A / ETEC).